The chain runs to 129 residues: Small ribosomal subunit protein uS11 (129 aa).

It belongs to the universal ribosomal protein uS11 family. As to quaternary structure, part of the 30S ribosomal subunit. Interacts with proteins S7 and S18. Binds to IF-3.

In terms of biological role, located on the platform of the 30S subunit, it bridges several disparate RNA helices of the 16S rRNA. Forms part of the Shine-Dalgarno cleft in the 70S ribosome. The protein is Small ribosomal subunit protein uS11 of Serratia proteamaculans (strain 568).